The following is a 339-amino-acid chain: DNA-directed RNA polymerase subunit alpha (339 aa).

Residues 1–233 (MVREEVAGST…DLFLPFLHAE (233 aa)) are alpha N-terminal domain (alpha-NTD). Residues 264 to 339 (KKGIPLNYIF…IDLLKNKLSF (76 aa)) are alpha C-terminal domain (alpha-CTD).

It belongs to the RNA polymerase alpha chain family. In plastids the minimal PEP RNA polymerase catalytic core is composed of four subunits: alpha, beta, beta', and beta''. When a (nuclear-encoded) sigma factor is associated with the core the holoenzyme is formed, which can initiate transcription.

It is found in the plastid. The protein localises to the chloroplast. The catalysed reaction is RNA(n) + a ribonucleoside 5'-triphosphate = RNA(n+1) + diphosphate. DNA-dependent RNA polymerase catalyzes the transcription of DNA into RNA using the four ribonucleoside triphosphates as substrates. The protein is DNA-directed RNA polymerase subunit alpha of Psathyrostachys rupestris (Hordeum rupestre).